The chain runs to 574 residues: Calcium-dependent protein kinase 9 (574 aa).

The disordered stretch occupies residues 1–64 (MGNTCCVAPA…RARAKPNPYD (64 aa)). Glycine 2 is lipidated: N-myristoyl glycine. Over residues 28-40 (KSPAPSATTTTAT) the composition is skewed to low complexity. One can recognise a Protein kinase domain in the interval 101–359 (YQLGRELGRG…AQQVLDHPWL (259 aa)). ATP is bound by residues 107–115 (LGRGEFGVT) and lysine 130. Catalysis depends on aspartate 225, which acts as the Proton acceptor. The segment at 365–395 (APNVPLGDVVRARLKQFSLMNRLKKKAMRVI) is autoinhibitory domain. EF-hand domains lie at 402–437 (EEVE…VGSK), 438–473 (LAEP…LQRL), 474–509 (SNDN…DSGH), and 510–545 (ADDA…GTDW). Residues aspartate 415, aspartate 417, asparagine 419, arginine 421, glutamate 426, aspartate 451, aspartate 453, asparagine 455, tyrosine 457, glutamate 462, aspartate 487, aspartate 489, serine 491, tyrosine 493, glutamate 498, aspartate 523, aspartate 525, aspartate 527, arginine 529, and glutamate 534 each contribute to the Ca(2+) site.

The protein belongs to the protein kinase superfamily. Ser/Thr protein kinase family. CDPK subfamily. In terms of tissue distribution, expressed in leaf blades and stems. Expressed at low levels in anthers and spikelets.

It localises to the membrane. The catalysed reaction is L-seryl-[protein] + ATP = O-phospho-L-seryl-[protein] + ADP + H(+). The enzyme catalyses L-threonyl-[protein] + ATP = O-phospho-L-threonyl-[protein] + ADP + H(+). Activated by calcium. Autophosphorylation may play an important role in the regulation of the kinase activity. May play a role in signal transduction pathways that involve calcium as a second messenger. Functions in signal transduction pathways that positively regulate responses to drought, osmotic, and dehydration stress. Regulates expression of stress-associated genes in response to drought. Involved in tolerance to drought stress by increasing proline and soluble sugars, and improving stomatal closure. Required for pollen maturation and spikelet fertility. The sequence is that of Calcium-dependent protein kinase 9 from Oryza sativa subsp. japonica (Rice).